Reading from the N-terminus, the 365-residue chain is Patr class I histocompatibility antigen, A-2 alpha chain (365 aa).

The N-terminal stretch at 1-24 (MAVMPPRTLLLLLSGALALTQTWA) is a signal peptide. The interval 25-114 (GSHSMRYFFT…LRGYYNQSED (90 aa)) is alpha-1. Residues 25–308 (GSHSMRYFFT…EPSSQPTIPI (284 aa)) lie on the Extracellular side of the membrane. The N-linked (GlcNAc...) asparagine glycan is linked to Asn-110. An alpha-2 region spans residues 115–206 (GSHTIQIMYG…ENGKETLQRT (92 aa)). 2 disulfides stabilise this stretch: Cys-125–Cys-188 and Cys-227–Cys-283. An alpha-3 region spans residues 207–298 (DPPKTHMTHH…GLPKPLTLRW (92 aa)). The 87-residue stretch at 209–295 (PKTHMTHHPI…QHEGLPKPLT (87 aa)) folds into the Ig-like C1-type domain. The tract at residues 299-308 (EPSSQPTIPI) is connecting peptide. A helical membrane pass occupies residues 309 to 332 (VGIIAGLVLLGAVITGAVVAAVMW). At 333 to 365 (RRKSSDRKGGSYTQAASSDSAQGSDVSLTACKV) the chain is on the cytoplasmic side. Positions 339–360 (RKGGSYTQAASSDSAQGSDVSL) are disordered. A Phosphoserine modification is found at Ser-343. At Tyr-344 the chain carries Phosphotyrosine. Residues 346 to 359 (QAASSDSAQGSDVS) are compositionally biased toward low complexity. Phosphoserine is present on residues Ser-349, Ser-350, Ser-352, Ser-356, and Ser-359.

This sequence belongs to the MHC class I family. Heterodimer of an alpha chain and a beta chain (beta-2-microglobulin).

Its subcellular location is the membrane. In terms of biological role, involved in the presentation of foreign antigens to the immune system. In Pan troglodytes (Chimpanzee), this protein is Patr class I histocompatibility antigen, A-2 alpha chain.